The following is a 236-amino-acid chain: Ribosome maturation protein SDO1 homolog (236 aa).

It belongs to the SDO1/SBDS family. In terms of assembly, crystallized in association with 70S ribosomes.

This chain is Ribosome maturation protein SDO1 homolog, found in Thermococcus kodakarensis (strain ATCC BAA-918 / JCM 12380 / KOD1) (Pyrococcus kodakaraensis (strain KOD1)).